The primary structure comprises 282 residues: Ribosome biogenesis GTPase A (282 aa).

The 165-residue stretch at 14 to 178 (RREVTEKLKL…LLDTPGILWP (165 aa)) folds into the CP-type G domain. GTP contacts are provided by residues 58–61 (NKAD), 86–87 (NS), 130–135 (NVGKST), and Gly-174.

This sequence belongs to the TRAFAC class YlqF/YawG GTPase family. MTG1 subfamily. Interacts with ctc. Interacts with the immature 50S ribosome subunit. 2 molecules of rbgA bind to one 50S subunit.

The protein localises to the cytoplasm. Functionally, essential protein that is required for a late step of 50S ribosomal subunit assembly. Has GTPase activity that is stimulated by interaction with the immature 50S ribosome subunit. Binds to the 23S rRNA. Required for the association of ribosomal proteins rplP and rpmA with the large subunit. This is Ribosome biogenesis GTPase A from Bacillus pumilus (strain SAFR-032).